The sequence spans 210 residues: RNA binding protein, mRNA processing factor 2 (210 aa).

Positions 1–10 (MSNLKPDVEH) are enriched in basic and acidic residues. The interval 1-25 (MSNLKPDVEHCTGAGTGTGTGPSGP) is disordered. At Ser-2 the chain carries N-acetylserine. The RRM domain maps to 31–108 (RTLFVSGLPV…QTLRLEFAKA (78 aa)). The segment at 41–51 (DIKPRELYLLF) is important for homodimerization.

Homodimer. Interacts with EEF2.

Its subcellular location is the cytoplasm. The protein resides in the nucleus. It is found in the stress granule. In terms of biological role, RNA-binding protein involved in the regulation of smooth muscle cell differentiation and proliferation in the gastrointestinal system. Binds NOG mRNA, the major inhibitor of the bone morphogenetic protein (BMP) pathway. Mediates an increase of NOG mRNA levels, thereby contributing to the negative regulation of BMP signaling pathway and promoting reversible dedifferentiation and proliferation of smooth muscle cells. Acts as a pre-mRNA alternative splicing regulator. Mediates ACTN1 and FLNB alternative splicing. Likely binds to mRNA tandem CAC trinucleotide or CA dinucleotide motifs. The protein is RNA binding protein, mRNA processing factor 2 (Rbpms2) of Rattus norvegicus (Rat).